The chain runs to 116 residues: Phosphoribosyl-ATP pyrophosphatase (116 aa).

Belongs to the PRA-PH family.

The protein localises to the cytoplasm. The catalysed reaction is 1-(5-phospho-beta-D-ribosyl)-ATP + H2O = 1-(5-phospho-beta-D-ribosyl)-5'-AMP + diphosphate + H(+). It functions in the pathway amino-acid biosynthesis; L-histidine biosynthesis; L-histidine from 5-phospho-alpha-D-ribose 1-diphosphate: step 2/9. The chain is Phosphoribosyl-ATP pyrophosphatase from Nitrobacter winogradskyi (strain ATCC 25391 / DSM 10237 / CIP 104748 / NCIMB 11846 / Nb-255).